Consider the following 734-residue polypeptide: Casein kinase II subunit alpha'-interacting protein (734 aa).

The tract at residues 608–654 is disordered; sequence SLLPSTSSSTSSSSTTSSSSSVASASSDSSSSSSSSSSFSISSSSSP. A compositionally biased stretch (low complexity) spans 612 to 654; sequence STSSSTSSSSTTSSSSSVASASSDSSSSSSSSSSFSISSSSSP.

In terms of assembly, interacts (via C-terminus) with CSNK2A2. Post-translationally, phosphorylated by CK2 (casein kinase II), specifically by complexes containing catalytic subunit CSNK2A2.

It is found in the nucleus. Its function is as follows. May play a role in chromatin regulation of male germ cells. This chain is Casein kinase II subunit alpha'-interacting protein, found in Homo sapiens (Human).